A 181-amino-acid chain; its full sequence is Protein OPG005 (181 aa).

The protein is Protein OPG005 (OPG005) of Vaccinia virus (strain Copenhagen) (VACV).